The primary structure comprises 210 residues: Outer-membrane lipoprotein LolB (210 aa).

Residues 1-18 (MKKFTKILSLSTLLFLAG) form the signal peptide. C19 carries the N-palmitoyl cysteine lipid modification. The S-diacylglycerol cysteine moiety is linked to residue C19.

This sequence belongs to the LolB family. In terms of assembly, monomer.

The protein resides in the cell outer membrane. Its function is as follows. Plays a critical role in the incorporation of lipoproteins in the outer membrane after they are released by the LolA protein. The chain is Outer-membrane lipoprotein LolB from Actinobacillus pleuropneumoniae serotype 7 (strain AP76).